The following is a 172-amino-acid chain: MVDKRESYTKEDLLASSRGELFGAKGPQLPAPNMLMMDRVVKMTETGGNFDKGYVEAELDINPDLWFFGCHFIGDPVMPGCLGLDAMWQLVGFYLGWLGGEGKGRALGVGEVKFTGQVLPTARKVTYRIHFKRIVNRRLIMGLADGEVLVDGRLIYTAHDLKVGLFQDTSAF.

The active site involves histidine 71.

It belongs to the thioester dehydratase family. FabA subfamily. As to quaternary structure, homodimer.

It is found in the cytoplasm. It catalyses the reaction a (3R)-hydroxyacyl-[ACP] = a (2E)-enoyl-[ACP] + H2O. The enzyme catalyses (3R)-hydroxydecanoyl-[ACP] = (2E)-decenoyl-[ACP] + H2O. The catalysed reaction is (2E)-decenoyl-[ACP] = (3Z)-decenoyl-[ACP]. It functions in the pathway lipid metabolism; fatty acid biosynthesis. Necessary for the introduction of cis unsaturation into fatty acids. Catalyzes the dehydration of (3R)-3-hydroxydecanoyl-ACP to E-(2)-decenoyl-ACP and then its isomerization to Z-(3)-decenoyl-ACP. Can catalyze the dehydratase reaction for beta-hydroxyacyl-ACPs with saturated chain lengths up to 16:0, being most active on intermediate chain length. This Salmonella choleraesuis (strain SC-B67) protein is 3-hydroxydecanoyl-[acyl-carrier-protein] dehydratase.